We begin with the raw amino-acid sequence, 165 residues long: Large ribosomal subunit protein uL10 (165 aa).

This sequence belongs to the universal ribosomal protein uL10 family. Part of the ribosomal stalk of the 50S ribosomal subunit. The N-terminus interacts with L11 and the large rRNA to form the base of the stalk. The C-terminus forms an elongated spine to which L12 dimers bind in a sequential fashion forming a multimeric L10(L12)X complex.

Forms part of the ribosomal stalk, playing a central role in the interaction of the ribosome with GTP-bound translation factors. The polypeptide is Large ribosomal subunit protein uL10 (Pectobacterium carotovorum subsp. carotovorum (strain PC1)).